A 200-amino-acid chain; its full sequence is Formate dehydrogenase iron-sulfur subunit (200 aa).

4Fe-4S ferredoxin-type domains are found at residues 7 to 37 (VKFY…VGVN), 50 to 81 (GKEK…VRAD), and 82 to 111 (GIVL…FPKS). [4Fe-4S] cluster-binding residues include cysteine 16, cysteine 19, cysteine 22, cysteine 26, cysteine 59, cysteine 62, cysteine 67, cysteine 71, cysteine 91, cysteine 94, cysteine 97, cysteine 101, cysteine 123, cysteine 126, cysteine 155, and cysteine 159.

As to quaternary structure, formate dehydrogenase is a membrane-bound complex, formed of at least three different subunits. The cofactor is [4Fe-4S] cluster.

Functionally, this chain is an electron transfer unit containing 18 cysteine residues, 16 of which occur in four clusters. This chain is Formate dehydrogenase iron-sulfur subunit (fdhB1), found in Wolinella succinogenes (strain ATCC 29543 / DSM 1740 / CCUG 13145 / JCM 31913 / LMG 7466 / NCTC 11488 / FDC 602W) (Vibrio succinogenes).